The sequence spans 634 residues: Probable potassium transport system protein Kup (634 aa).

12 helical membrane passes run alanine 19–leucine 39, valine 62–valine 82, phenylalanine 113–proline 133, glycine 150–glutamine 170, isoleucine 177–valine 197, isoleucine 225–alanine 245, tryptophan 259–leucine 279, leucine 291–isoleucine 311, isoleucine 349–phenylalanine 369, tyrosine 379–tryptophan 399, leucine 406–alanine 426, and valine 431–threonine 451.

This sequence belongs to the HAK/KUP transporter (TC 2.A.72) family.

It localises to the cell inner membrane. The enzyme catalyses K(+)(in) + H(+)(in) = K(+)(out) + H(+)(out). Transport of potassium into the cell. Likely operates as a K(+):H(+) symporter. This is Probable potassium transport system protein Kup from Pseudomonas paraeruginosa (strain DSM 24068 / PA7) (Pseudomonas aeruginosa (strain PA7)).